A 459-amino-acid chain; its full sequence is Bifunctional protein GlmU (459 aa).

The tract at residues 1 to 228 (MNFKAIILAA…IEELMGVNSR (228 aa)) is pyrophosphorylase. Residues 8 to 11 (LAAG), lysine 22, glutamine 72, and 77 to 78 (GT) each bind UDP-N-acetyl-alpha-D-glucosamine. A Mg(2+)-binding site is contributed by aspartate 101. Glycine 138, glutamate 153, asparagine 168, and asparagine 226 together coordinate UDP-N-acetyl-alpha-D-glucosamine. Asparagine 226 is a binding site for Mg(2+). A linker region spans residues 229–249 (VELSKAEEIMRRRINESHMVN). The N-acetyltransferase stretch occupies residues 250 to 459 (GVTIIDTNST…KKNQKDDQSK (210 aa)). UDP-N-acetyl-alpha-D-glucosamine is bound by residues arginine 331 and lysine 349. Histidine 361 serves as the catalytic Proton acceptor. Residues tyrosine 364 and asparagine 375 each contribute to the UDP-N-acetyl-alpha-D-glucosamine site. Residues 384-385 (NY), serine 403, threonine 421, and arginine 438 contribute to the acetyl-CoA site.

The protein in the N-terminal section; belongs to the N-acetylglucosamine-1-phosphate uridyltransferase family. It in the C-terminal section; belongs to the transferase hexapeptide repeat family. Homotrimer. Mg(2+) is required as a cofactor.

It localises to the cytoplasm. The catalysed reaction is alpha-D-glucosamine 1-phosphate + acetyl-CoA = N-acetyl-alpha-D-glucosamine 1-phosphate + CoA + H(+). The enzyme catalyses N-acetyl-alpha-D-glucosamine 1-phosphate + UTP + H(+) = UDP-N-acetyl-alpha-D-glucosamine + diphosphate. It participates in nucleotide-sugar biosynthesis; UDP-N-acetyl-alpha-D-glucosamine biosynthesis; N-acetyl-alpha-D-glucosamine 1-phosphate from alpha-D-glucosamine 6-phosphate (route II): step 2/2. It functions in the pathway nucleotide-sugar biosynthesis; UDP-N-acetyl-alpha-D-glucosamine biosynthesis; UDP-N-acetyl-alpha-D-glucosamine from N-acetyl-alpha-D-glucosamine 1-phosphate: step 1/1. Its pathway is bacterial outer membrane biogenesis; LPS lipid A biosynthesis. Catalyzes the last two sequential reactions in the de novo biosynthetic pathway for UDP-N-acetylglucosamine (UDP-GlcNAc). The C-terminal domain catalyzes the transfer of acetyl group from acetyl coenzyme A to glucosamine-1-phosphate (GlcN-1-P) to produce N-acetylglucosamine-1-phosphate (GlcNAc-1-P), which is converted into UDP-GlcNAc by the transfer of uridine 5-monophosphate (from uridine 5-triphosphate), a reaction catalyzed by the N-terminal domain. The polypeptide is Bifunctional protein GlmU (Clostridioides difficile (strain 630) (Peptoclostridium difficile)).